Here is a 487-residue protein sequence, read N- to C-terminus: 3-octaprenyl-4-hydroxybenzoate carboxy-lyase (487 aa).

Position 172 (asparagine 172) interacts with Mn(2+). Prenylated FMN contacts are provided by residues 175-177 (IYR), 189-191 (RWL), and 194-195 (RG). Mn(2+) is bound at residue glutamate 238. Aspartate 287 (proton donor) is an active-site residue.

Belongs to the UbiD family. Homohexamer. Requires prenylated FMN as cofactor. Mn(2+) serves as cofactor.

The protein localises to the cell membrane. It catalyses the reaction a 4-hydroxy-3-(all-trans-polyprenyl)benzoate + H(+) = a 2-(all-trans-polyprenyl)phenol + CO2. It participates in cofactor biosynthesis; ubiquinone biosynthesis. Its function is as follows. Catalyzes the decarboxylation of 3-octaprenyl-4-hydroxy benzoate to 2-octaprenylphenol, an intermediate step in ubiquinone biosynthesis. The chain is 3-octaprenyl-4-hydroxybenzoate carboxy-lyase from Nitrosospira multiformis (strain ATCC 25196 / NCIMB 11849 / C 71).